The following is a 554-amino-acid chain: Valerianol synthase TPS1B (554 aa).

Mg(2+)-binding residues include Asp-307 and Asp-311. Positions 326–330 (VQRWD) match the DDXXD motif motif. Mg(2+) contacts are provided by Asp-452, Ser-456, and Glu-460.

This sequence belongs to the terpene synthase family. Mg(2+) serves as cofactor.

The catalysed reaction is (2E,6E)-farnesyl diphosphate + H2O = valerianol + diphosphate. It functions in the pathway secondary metabolite biosynthesis; terpenoid biosynthesis. Its function is as follows. Terpene synthase that catalyzes the biosynthesis of the terpene valerianol, which is a volatile compound of floral scent. The chain is Valerianol synthase TPS1B from Camellia hiemalis (Camellia).